The chain runs to 145 residues: Ribosomal RNA large subunit methyltransferase H (145 aa).

Residues L64, G93, and L112–F117 each bind S-adenosyl-L-methionine.

It belongs to the RNA methyltransferase RlmH family. As to quaternary structure, homodimer.

It is found in the cytoplasm. The enzyme catalyses pseudouridine(1915) in 23S rRNA + S-adenosyl-L-methionine = N(3)-methylpseudouridine(1915) in 23S rRNA + S-adenosyl-L-homocysteine + H(+). In terms of biological role, specifically methylates the pseudouridine at position 1915 (m3Psi1915) in 23S rRNA. The protein is Ribosomal RNA large subunit methyltransferase H of Prochlorococcus marinus (strain NATL2A).